The sequence spans 508 residues: 2,3-bisphosphoglycerate-independent phosphoglycerate mutase (508 aa).

Asp14 and Ser64 together coordinate Mn(2+). Ser64 acts as the Phosphoserine intermediate in catalysis. Substrate is bound by residues His125, 155-156 (RD), Arg187, Arg193, 259-262 (RADR), and Lys332. Mn(2+) contacts are provided by Asp399, His403, Asp440, His441, and His459.

Belongs to the BPG-independent phosphoglycerate mutase family. As to quaternary structure, monomer. It depends on Mn(2+) as a cofactor.

The catalysed reaction is (2R)-2-phosphoglycerate = (2R)-3-phosphoglycerate. The protein operates within carbohydrate degradation; glycolysis; pyruvate from D-glyceraldehyde 3-phosphate: step 3/5. Functionally, catalyzes the interconversion of 2-phosphoglycerate and 3-phosphoglycerate. The polypeptide is 2,3-bisphosphoglycerate-independent phosphoglycerate mutase (Pseudomonas fluorescens (strain Pf0-1)).